The primary structure comprises 193 residues: Inner membrane protein p54 (193 aa).

Residues 32-52 (YTILIAIVVLVIIIIVLIYLF) traverse the membrane as a helical segment. The disordered stretch occupies residues 84–126 (PQPGTSKPAGATTASVGKPVTGRPATNRPVTDRPATNNPVTDR). 4 tandem repeats follow at residues 135–138 (AAAS), 139–142 (AAAS), 143–146 (AAAS), and 147–150 (AAAS). A 4 X 4 AA tandem repeats of A-A-A-S region spans residues 135–150 (AAASAAASAAASAAAS). An interaction with host DYNLL1 region spans residues 159 to 171 (YTTVTTQNTASQT).

The protein belongs to the asfivirus envelope protein p54 family. As to quaternary structure, interacts with the host light chain cytoplasmic dynein DYNLL1; this interaction is critical for intracellular microtubule-dependent virus transport toward viral factories.

It localises to the virion membrane. The protein localises to the host cytoplasm. It is found in the host cytoskeleton. The protein resides in the host endoplasmic reticulum membrane. Inner envelope protein involved, through its interaction with host dynein, in the intracellular microtubule-dependent transport of viral capsid toward viral factories. Seems to induce caspase-3 activation and apoptosis. Plays a role in virion morphogenesis by recruiting and transforming the host ER membranes into the precursors of the viral envelope. Involved in virus attachment to the host cell. The polypeptide is Inner membrane protein p54 (Ornithodoros (relapsing fever ticks)).